Reading from the N-terminus, the 388-residue chain is Succinate--CoA ligase [ADP-forming] subunit beta (388 aa).

The ATP-grasp domain maps to 9-244; sequence KQLFAEYGLP…PSQDDPREAH (236 aa). Residues lysine 46, 53-55, glutamate 99, threonine 102, and glutamate 107 each bind ATP; that span reads GRG. Mg(2+) is bound by residues asparagine 199 and aspartate 213. Substrate is bound by residues asparagine 264 and 321–323; that span reads GIV.

This sequence belongs to the succinate/malate CoA ligase beta subunit family. As to quaternary structure, heterotetramer of two alpha and two beta subunits. It depends on Mg(2+) as a cofactor.

It carries out the reaction succinate + ATP + CoA = succinyl-CoA + ADP + phosphate. The catalysed reaction is GTP + succinate + CoA = succinyl-CoA + GDP + phosphate. It participates in carbohydrate metabolism; tricarboxylic acid cycle; succinate from succinyl-CoA (ligase route): step 1/1. Its function is as follows. Succinyl-CoA synthetase functions in the citric acid cycle (TCA), coupling the hydrolysis of succinyl-CoA to the synthesis of either ATP or GTP and thus represents the only step of substrate-level phosphorylation in the TCA. The beta subunit provides nucleotide specificity of the enzyme and binds the substrate succinate, while the binding sites for coenzyme A and phosphate are found in the alpha subunit. The chain is Succinate--CoA ligase [ADP-forming] subunit beta from Stutzerimonas stutzeri (strain A1501) (Pseudomonas stutzeri).